A 118-amino-acid polypeptide reads, in one-letter code: Turripeptide NCR-01 (118 aa).

An N-terminal signal peptide occupies residues 1–16 (MLRLILAVALVAACLA). The disordered stretch occupies residues 63-118 (QGFQGFLPQPHQKRDSYQHGGYQHQQSFDNFQGSGGMNNDNSDDSFALRNFNNDGY). The segment covering 85–102 (QHQQSFDNFQGSGGMNND) has biased composition (polar residues).

In terms of tissue distribution, expressed by the venom duct.

The protein localises to the secreted. This Gemmula speciosa (Splendid gem-turris) protein is Turripeptide NCR-01.